The primary structure comprises 215 residues: GTP-binding protein YPT6 (215 aa).

Position 17 to 24 (17 to 24) interacts with GTP; sequence GEQGVGKT. The short motif at 39 to 47 is the Effector region element; sequence YQATIGIDF. GTP is bound by residues 65 to 69 and 124 to 127; these read DTAGQ and NKSD. Residues 178-196 are compositionally biased toward polar residues; sequence NSESTPLDSENANSANQNK. The segment at 178–215 is disordered; it reads NSESTPLDSENANSANQNKPGVIDISTAEEQEQSACQC. 2 S-geranylgeranyl cysteine lipidation sites follow: Cys-213 and Cys-215. Residue Cys-215 is modified to Cysteine methyl ester.

This sequence belongs to the small GTPase superfamily. Rab family. As to quaternary structure, interacts with YIF1, YIP3 and YIP4.

Its subcellular location is the cell membrane. Functionally, protein transport. Might participate in post-Golgi transport. This is GTP-binding protein YPT6 (YPT6) from Saccharomyces cerevisiae (strain ATCC 204508 / S288c) (Baker's yeast).